Reading from the N-terminus, the 244-residue chain is Flavin-dependent thymidylate synthase (244 aa).

In terms of domain architecture, ThyX spans 2–207; it reads VRVTLVNYTR…ELRPIIKWAK (206 aa). Residues Ser56, 80 to 82, and Gln88 contribute to the FAD site; that span reads RHR. Residues 77–80, 88–92, and Arg146 contribute to the dUMP site; these read QLVR and QQSQR. Positions 80 to 90 match the ThyX motif motif; sequence RHRIASYTQQS. FAD is bound by residues 162–164 and His168; that span reads NLR. Arg173 is a dUMP binding site. Arg173 acts as the Involved in ionization of N3 of dUMP, leading to its activation in catalysis.

This sequence belongs to the thymidylate synthase ThyX family. In terms of assembly, homotetramer. Requires FAD as cofactor.

It catalyses the reaction dUMP + (6R)-5,10-methylene-5,6,7,8-tetrahydrofolate + NADPH + H(+) = dTMP + (6S)-5,6,7,8-tetrahydrofolate + NADP(+). It functions in the pathway pyrimidine metabolism; dTTP biosynthesis. In terms of biological role, catalyzes the reductive methylation of 2'-deoxyuridine-5'-monophosphate (dUMP) to 2'-deoxythymidine-5'-monophosphate (dTMP) while utilizing 5,10-methylenetetrahydrofolate (mTHF) as the methyl donor, and NADPH and FADH(2) as the reductant. The protein is Flavin-dependent thymidylate synthase of Pyrococcus abyssi (strain GE5 / Orsay).